A 155-amino-acid polypeptide reads, in one-letter code: Endoribonuclease YbeY (155 aa).

Zn(2+) contacts are provided by His110, His114, and His120.

The protein belongs to the endoribonuclease YbeY family. Zn(2+) serves as cofactor.

The protein resides in the cytoplasm. In terms of biological role, single strand-specific metallo-endoribonuclease involved in late-stage 70S ribosome quality control and in maturation of the 3' terminus of the 16S rRNA. This is Endoribonuclease YbeY from Deinococcus radiodurans (strain ATCC 13939 / DSM 20539 / JCM 16871 / CCUG 27074 / LMG 4051 / NBRC 15346 / NCIMB 9279 / VKM B-1422 / R1).